Reading from the N-terminus, the 1400-residue chain is DNA-directed RNA polymerase subunit beta' (1400 aa).

Zn(2+) contacts are provided by Cys71, Cys73, Cys86, and Cys89. The Mg(2+) site is built by Asp462, Asp464, and Asp466. Residues Cys811, Cys885, Cys892, and Cys895 each contribute to the Zn(2+) site.

It belongs to the RNA polymerase beta' chain family. In terms of assembly, the RNAP catalytic core consists of 2 alpha, 1 beta, 1 beta' and 1 omega subunit. When a sigma factor is associated with the core the holoenzyme is formed, which can initiate transcription. Mg(2+) serves as cofactor. Requires Zn(2+) as cofactor.

The enzyme catalyses RNA(n) + a ribonucleoside 5'-triphosphate = RNA(n+1) + diphosphate. DNA-dependent RNA polymerase catalyzes the transcription of DNA into RNA using the four ribonucleoside triphosphates as substrates. The protein is DNA-directed RNA polymerase subunit beta' of Brucella suis biovar 1 (strain 1330).